The primary structure comprises 204 residues: Oxidoreductase iacF (204 aa).

Belongs to the oxidoreductase OpS7 family.

It participates in secondary metabolite biosynthesis. Oxidoreductase; part of the gene cluster that mediates the biosynthesis of iso-A82775C, a enylepoxycyclohexane and biosynthetic precursor of the chloropestolide anticancer natural products. Within the cluster, the prenyltransferase iacE prenylates siccayne to generate pestalodiol E, using dimethylallyl diphosphate (DMAPP) as cosubstrate. The probable oxidoreductase iacF is then involved in the epoxidation of pestalodiol F to pestalodiol F, which is further converted to pestalofone A by the short-chain dehydrogenase/reductase iacG. Iso-A82775C is subsequently generated from pestalofone A by the short-chain dehydrogenase/reductase iacC. Iso-A82775C is further condensed with maldoxin via a Diels-Alder reaction to produce the anticancer natural products chloropestolides A to E. The sequence is that of Oxidoreductase iacF from Pestalotiopsis fici (strain W106-1 / CGMCC3.15140).